The chain runs to 140 residues: Seminal plasma protein A3 (140 aa).

Positions 1-25 are cleaved as a signal peptide; it reads MALRLGLFLIWAGVSMFLQLDPVNG. 2 Fibronectin type-II domains span residues 49–93 and 94–140; these read TKDN…YCTK and NDYA…WKYC. 4 cysteine pairs are disulfide-bonded: cysteine 54–cysteine 78, cysteine 68–cysteine 91, cysteine 99–cysteine 125, and cysteine 113–cysteine 140.

This sequence belongs to the seminal plasma protein family.

It is found in the secreted. Functionally, the BSP-A proteins from seminal plasma exhibit both simulatory and inhibitory actions on the release of pituitary gonadotropins. The exact function of these proteins is not known. The polypeptide is Seminal plasma protein A3 (Bos taurus (Bovine)).